The primary structure comprises 278 residues: Envelope glycoprotein L (278 aa).

An N-terminal signal peptide occupies residues 1–30 (MCRRPDCGFSFSPGPVVLLWCCLLLPIVSS). In terms of domain architecture, gL betaherpesvirus-type spans 43-256 (VPAECPELTR…DKYYAGLPPE (214 aa)). A disulfide bridge links Cys-154 with Cys-159.

It belongs to the herpesviridae glycoprotein L (gL) family. Betaherpesvirinae gL subfamily. Interacts with glycoprotein H (gH); this interaction is necessary for the correct processing and cell surface expression of gH. Forms the envelope pentamer complex (PC) composed of gH, gL, UL128, UL130, and UL131A. The pentamer interacts with host NRP2. Forms the envelope trimer complex composed of gH, gL, and gO. The trimer interacts with host PDGFRA.

Its subcellular location is the virion membrane. The protein localises to the host cell membrane. It localises to the host Golgi apparatus. It is found in the host trans-Golgi network. Its function is as follows. The heterodimer glycoprotein H-glycoprotein L is required for the fusion of viral and plasma membranes leading to virus entry into the host cell. Acts as a functional inhibitor of gH and maintains gH in an inhibited form. Upon binding to host integrins, gL dissociates from gH leading to activation of the viral fusion glycoproteins gB and gH. In human cytomegalovirus, forms two distincts complexes to mediate viral entry, a trimer and a pentamer at the surface of the virion envelope. The gH-gL-gO trimer is required for infection in fibroblasts by interacting with host PDGFRA. The gH-gL-UL128-UL130-UL131A pentamer is essential for viral entry in epithelial, endothelial and myeloid cells via interaction with host NRP2. The protein is Envelope glycoprotein L of Human cytomegalovirus (strain AD169) (HHV-5).